The following is an 897-amino-acid chain: Translation initiation factor IF-2 (897 aa).

2 disordered regions span residues 69–88 (RKTK…KEVQ) and 95–304 (RTYV…NAMK). A compositionally biased stretch (basic and acidic residues) spans 101-161 (SALEDEQRQA…EEKARIEAQQ (61 aa)). Residues 162–179 (KARQAQQPAKAAGSTAQQ) are compositionally biased toward low complexity. 4 stretches are compositionally biased toward basic and acidic residues: residues 180–196 (EAEK…KRQQ), 203–217 (KAEE…EARV), 226–239 (WAEE…ESSD), and 277–286 (RREDDRDARN). Residues 287-296 (PRARKGKRGK) show a composition bias toward basic residues. The region spanning 397-566 (PRAPVVTIMG…LIQSEVLELK (170 aa)) is the tr-type G domain. The segment at 406-413 (GHVDHGKT) is G1. A GTP-binding site is contributed by 406–413 (GHVDHGKT). A G2 region spans residues 431–435 (GITQH). A G3 region spans residues 452 to 455 (DTPG). GTP contacts are provided by residues 452-456 (DTPGH) and 506-509 (NKID). The interval 506–509 (NKID) is G4. Residues 542–544 (SAK) form a G5 region.

The protein belongs to the TRAFAC class translation factor GTPase superfamily. Classic translation factor GTPase family. IF-2 subfamily.

It localises to the cytoplasm. Its function is as follows. One of the essential components for the initiation of protein synthesis. Protects formylmethionyl-tRNA from spontaneous hydrolysis and promotes its binding to the 30S ribosomal subunits. Also involved in the hydrolysis of GTP during the formation of the 70S ribosomal complex. The chain is Translation initiation factor IF-2 from Aeromonas hydrophila subsp. hydrophila (strain ATCC 7966 / DSM 30187 / BCRC 13018 / CCUG 14551 / JCM 1027 / KCTC 2358 / NCIMB 9240 / NCTC 8049).